The primary structure comprises 349 residues: Hydroxymethylglutaryl-CoA synthase (349 aa).

(3S)-3-hydroxy-3-methylglutaryl-CoA is bound by residues Asp30 and Ala31. Catalysis depends on Glu82, which acts as the Proton donor/acceptor. Residues Cys114 and Thr155 each contribute to the (3S)-3-hydroxy-3-methylglutaryl-CoA site. The Acyl-thioester intermediate role is filled by Cys114. Arg203 is a binding site for CoA. (3S)-3-hydroxy-3-methylglutaryl-CoA is bound by residues Thr205 and His238. Catalysis depends on His238, which acts as the Proton donor/acceptor. Residue Lys243 participates in CoA binding. Residues Asn270 and Ser300 each contribute to the (3S)-3-hydroxy-3-methylglutaryl-CoA site.

This sequence belongs to the thiolase-like superfamily. Archaeal HMG-CoA synthase family. In terms of assembly, interacts with acetoacetyl-CoA thiolase that catalyzes the precedent step in the pathway and with a DUF35 protein. The acetoacetyl-CoA thiolase/HMG-CoA synthase complex channels the intermediate via a fused CoA-binding site, which allows for efficient coupling of the endergonic thiolase reaction with the exergonic HMGCS reaction.

It catalyses the reaction acetoacetyl-CoA + acetyl-CoA + H2O = (3S)-3-hydroxy-3-methylglutaryl-CoA + CoA + H(+). The protein operates within metabolic intermediate biosynthesis; (R)-mevalonate biosynthesis; (R)-mevalonate from acetyl-CoA: step 2/3. In terms of biological role, catalyzes the condensation of acetyl-CoA with acetoacetyl-CoA to form 3-hydroxy-3-methylglutaryl-CoA (HMG-CoA). Functions in the mevalonate (MVA) pathway leading to isopentenyl diphosphate (IPP), a key precursor for the biosynthesis of isoprenoid compounds that are building blocks of archaeal membrane lipids. The protein is Hydroxymethylglutaryl-CoA synthase of Methanococcus maripaludis (strain C6 / ATCC BAA-1332).